The chain runs to 613 residues: MFNSNIPASSLLSIDSGGLLMGGHTPKTPEILNSLIAMTNPLENFSYSSAAAAAAAVSVASSSASCSAASTPVVTVRHFNGHPNGQSHSQDSSHSSCSGSPLDSPAGTATTPSVQQTCSRLIKEGLKLSIQSKRKLSTCDSSSGSEQPHSKYSRRSSNHNGHSGSSNNYSGSMSNANDLDDDCEESSDDDSETKSQPKGLTPEDEDRRRRRRERNKIAATKCRMKKRERTQNLIKESEVLDTQNVELKNQVRQLETERQKLVDMLKSHGCQRAGGCQLPSQLLQSPAQKYLSELELETVSIDGPNSGNNNQRLQSIPSMATFKYGSKTAAAMAQQLPNGYCKPSPSAQEFEHAGYQQQQQQQQQQQPQSLNPAGNNVIDQQHANPSPSLLSDYVPNCDGLTGSASNHPSHNNNNNNNNSSGASSNTSNNNSNISSHSSNATSSTTPTATSSAIEFVKNELVDSQSPYTTALSAERFLFEPSDGFPDIKHACVLPSPCGINGLNMASVVNTNGSTGNNNNSHHNNNNNNNNHLMDFHQGLQHGNIGTGVGVGVGVGVGVGVGVGVMTPYDDEQLLLLKNGCFATDLLSQLVEEGGEYVDLDSATAFMNNGSCLA.

Disordered regions lie at residues 77–115 (RHFNGHPNGQSHSQDSSHSSCSGSPLDSPAGTATTPSVQ) and 133–218 (KRKL…NKIA). The span at 85-105 (GQSHSQDSSHSSCSGSPLDSP) shows a compositional bias: low complexity. The span at 138–147 (TCDSSSGSEQ) shows a compositional bias: polar residues. The segment covering 158–175 (NHNGHSGSSNNYSGSMSN) has biased composition (low complexity). The segment covering 178–191 (DLDDDCEESSDDDS) has biased composition (acidic residues). The 64-residue stretch at 205–268 (EDRRRRRRER…QKLVDMLKSH (64 aa)) folds into the bZIP domain. The segment at 207–229 (RRRRRRERNKIAATKCRMKKRER) is basic motif. The segment at 233 to 261 (LIKESEVLDTQNVELKNQVRQLETERQKL) is leucine-zipper. The interval 337 to 446 (PNGYCKPSPS…SSNATSSTTP (110 aa)) is disordered. Low complexity predominate over residues 356–368 (QQQQQQQQQQQPQ). The span at 369 to 389 (SLNPAGNNVIDQQHANPSPSL) shows a compositional bias: polar residues. Residues 402 to 446 (GSASNHPSHNNNNNNNNSSGASSNTSNNNSNISSHSSNATSSTTP) show a composition bias toward low complexity.

This sequence belongs to the bZIP family. ATF subfamily. Interacts with Jra/jun; the interaction enhances the DNA-binding activity of Atf3. As to expression, moderate expression in some regions of the larval nervous system, the ring gland and imaginal disks. High expression in larval gut, excretory malpighian tubules, salivary glands, and, to a lesser extent, the fat body where levels are approximately 2.5-fold less than the gut.

Its subcellular location is the nucleus. Functionally, transcription factor which binds to the cAMP response element (CRE). Regulates metabolic and innate immune homeostasis, possibly by controlling appropriate expression of genes involved in peritrophic matrix composition and ensuring the normal digestive and immune function of the gut. Required for the expression of odorant receptors Or43b and Or47b. The chain is Activating transcription factor 3 from Drosophila melanogaster (Fruit fly).